The following is a 446-amino-acid chain: Baeyer-Villiger oxidase mdpL (446 aa).

The protein belongs to the AflY oxidoreductase family. It depends on NADPH as a cofactor.

The protein operates within secondary metabolite biosynthesis. In terms of biological role, baeyer-Villiger oxidase; part of the gene cluster that mediates the biosynthesis of monodictyphenone, a prenyl xanthone derivative. The pathway begins with the synthesis of atrochrysone thioester by the polyketide synthase (PKS) mdpG. The atrochrysone carboxyl ACP thioesterase mdpF then breaks the thioester bond and releases the atrochrysone carboxylic acid from mdpG. The atrochrysone carboxylic acid is then converted to atrochrysone which is further transformed into emodin anthrone. The next step is performed by the anthrone oxygenase mdpH that catalyzes the oxidation of emodinanthrone to emodin. Emodin is further modified to yield monodictyphenone via several steps involving mdpB, mdpC mdpJ, mdpK and mdpL. These enzymes with xptA, xptB and xptC are also proposed to be involved in the synthesis of shamixanthone from emodin. Especially, direct reduction of emodin by the short chain dehydrogenase mdpC followed by dehydration catalyzed by the scytalone dehydratase-like protein mdpB gives loss of oxygen and formation of chrysophanol intermediate in two simple steps. In Emericella nidulans (strain FGSC A4 / ATCC 38163 / CBS 112.46 / NRRL 194 / M139) (Aspergillus nidulans), this protein is Baeyer-Villiger oxidase mdpL.